A 334-amino-acid polypeptide reads, in one-letter code: UL-16 binding protein 5 (334 aa).

The first 25 residues, 1–25, serve as a signal peptide directing secretion; it reads MAAAASPAFLLRLPLLLLLSSWCRT. Over 26–223 the chain is Extracellular; sequence GLADPHSLCY…TMSSGTAQPR (198 aa). The tract at residues 29 to 117 is MHC class I alpha-1 like; it reads DPHSLCYDIT…IQLENYIPKE (89 aa). The cysteines at positions 50 and 66 are disulfide-linked. An N-linked (GlcNAc...) asparagine glycan is attached at asparagine 82. The MHC class I alpha-2 like stretch occupies residues 118–210; the sequence is PLTLQARMSC…MDSTLEPSAG (93 aa). Cysteine 127 and cysteine 190 are joined by a disulfide. Residue glycine 218 is the site of GPI-anchor amidated glycine attachment. The propeptide at 219–334 is removed in mature form; the sequence is TAQPRATATT…YSEPLQVSIS (116 aa). The chain crosses the membrane as a helical span at residues 224-243; the sequence is ATATTLILCCLLIMCLLICS. At 244 to 334 the chain is on the cytoplasmic side; sequence RHSLTQSHGH…YSEPLQVSIS (91 aa).

This sequence belongs to the MHC class I family. As to quaternary structure, interacts with KLRK1/NKG2D. In terms of assembly, (Microbial infection) In CMV-infected cells, interacts with the viral glycoprotein UL16; this interaction causes RAET1G retention in the endoplasmic reticulum and cis-Golgi and prevents binding to and activation of KLRK1/NKG2D, providing CMV with an immune evasion mechanism. Post-translationally, the functional form is cleaved C-terminally of the GPI-anchor and yields a 28 kDa protein. Isoform 1 is highly expressed in colon and in a number of tumor cell lines and highly restricted in normal tissues. Both isoforms are frequently expressed in cell lines derived from epithelial cancers, and in primary breast cancers.

Its subcellular location is the cell membrane. It localises to the endoplasmic reticulum. The protein resides in the secreted. In terms of biological role, binds and activates the KLRK1/NKG2D receptor, mediating natural killer cell cytotoxicity. Down-regulates the expression of KLRK1 and stimulates natural killer cells to secrete IFNG. Functionally, stimulates natural killer cells to secrete IFNG. The polypeptide is UL-16 binding protein 5 (Homo sapiens (Human)).